A 165-amino-acid polypeptide reads, in one-letter code: Neurotrophin-3 (165 aa).

A signal peptide spans 1 to 3 (IQS). Positions 4–119 (TSMDQGSLSE…VLNRTSRRKR (116 aa)) are excised as a propeptide. Residue Asn-112 is glycosylated (N-linked (GlcNAc...) asparagine).

It belongs to the NGF-beta family.

The protein localises to the secreted. In terms of biological role, seems to promote the survival of visceral and proprioceptive sensory neurons. In Anilius scytale (Coral cylinder snake), this protein is Neurotrophin-3 (NTF3).